Consider the following 227-residue polypeptide: Cytochrome c oxidase subunit 2 (227 aa).

The Mitochondrial intermembrane segment spans residues 1–14 (MAYPFQLGLQDATS). A helical transmembrane segment spans residues 15–45 (PIMEELMNFHDHTLMIVFLISTLVLYIISLM). Topologically, residues 46 to 59 (LTTKLTHTSTMDAQ) are mitochondrial matrix. The chain crosses the membrane as a helical span at residues 60–87 (EVETIWTILPAVILILIALPSLRILYMM). Residues 88-227 (DEINNPALTV…YFENWSASMI (140 aa)) are Mitochondrial intermembrane-facing. Cu cation contacts are provided by H161, C196, E198, C200, H204, and M207. Residue E198 coordinates Mg(2+). Y218 carries the phosphotyrosine modification.

The protein belongs to the cytochrome c oxidase subunit 2 family. In terms of assembly, component of the cytochrome c oxidase (complex IV, CIV), a multisubunit enzyme composed of 14 subunits. The complex is composed of a catalytic core of 3 subunits MT-CO1, MT-CO2 and MT-CO3, encoded in the mitochondrial DNA, and 11 supernumerary subunits COX4I, COX5A, COX5B, COX6A, COX6B, COX6C, COX7A, COX7B, COX7C, COX8 and NDUFA4, which are encoded in the nuclear genome. The complex exists as a monomer or a dimer and forms supercomplexes (SCs) in the inner mitochondrial membrane with NADH-ubiquinone oxidoreductase (complex I, CI) and ubiquinol-cytochrome c oxidoreductase (cytochrome b-c1 complex, complex III, CIII), resulting in different assemblies (supercomplex SCI(1)III(2)IV(1) and megacomplex MCI(2)III(2)IV(2)). Found in a complex with TMEM177, COA6, COX18, COX20, SCO1 and SCO2. Interacts with TMEM177 in a COX20-dependent manner. Interacts with COX20. Interacts with COX16. Requires Cu cation as cofactor.

The protein resides in the mitochondrion inner membrane. It carries out the reaction 4 Fe(II)-[cytochrome c] + O2 + 8 H(+)(in) = 4 Fe(III)-[cytochrome c] + 2 H2O + 4 H(+)(out). Component of the cytochrome c oxidase, the last enzyme in the mitochondrial electron transport chain which drives oxidative phosphorylation. The respiratory chain contains 3 multisubunit complexes succinate dehydrogenase (complex II, CII), ubiquinol-cytochrome c oxidoreductase (cytochrome b-c1 complex, complex III, CIII) and cytochrome c oxidase (complex IV, CIV), that cooperate to transfer electrons derived from NADH and succinate to molecular oxygen, creating an electrochemical gradient over the inner membrane that drives transmembrane transport and the ATP synthase. Cytochrome c oxidase is the component of the respiratory chain that catalyzes the reduction of oxygen to water. Electrons originating from reduced cytochrome c in the intermembrane space (IMS) are transferred via the dinuclear copper A center (CU(A)) of subunit 2 and heme A of subunit 1 to the active site in subunit 1, a binuclear center (BNC) formed by heme A3 and copper B (CU(B)). The BNC reduces molecular oxygen to 2 water molecules using 4 electrons from cytochrome c in the IMS and 4 protons from the mitochondrial matrix. This is Cytochrome c oxidase subunit 2 (MT-CO2) from Maxomys surifer (Indomalayan maxomys).